The primary structure comprises 137 residues: MVEIVYWSGTGNTEAMANEIEAAVKAAGADVESVRFEDTNVDDVASKDVILLGCPAMGSEELEDSVVEPFFTDLAPKLKGKKVGLFGSYGWGSGEWMDAWKQRTEDTGATVIGTAIVNEMPDNAPECKELGEAAAKA.

The Flavodoxin-like domain occupies Val-2 to Ala-137.

It belongs to the flavodoxin family. FMN is required as a cofactor.

Functionally, low-potential electron donor to a number of redox enzymes. The protein is Flavodoxin of Megasphaera elsdenii.